A 448-amino-acid chain; its full sequence is Asparagine--tRNA ligase (448 aa).

This sequence belongs to the class-II aminoacyl-tRNA synthetase family. Homodimer.

Its subcellular location is the cytoplasm. It catalyses the reaction tRNA(Asn) + L-asparagine + ATP = L-asparaginyl-tRNA(Asn) + AMP + diphosphate + H(+). In Streptococcus sanguinis (strain SK36), this protein is Asparagine--tRNA ligase.